Here is a 457-residue protein sequence, read N- to C-terminus: PE-PGRS family protein PE_PGRS18 (457 aa).

A PE domain is found at 1 to 92; it reads MSFVNVAPQL…SSTYAVAEAA (92 aa). NHL repeat units lie at residues 291-321, 333-363, 379-404, and 419-447; these read FNDP…IDPV, NGPS…IDPN, GVAV…IDPA, and PTGV…ITGE.

Belongs to the mycobacterial PE family. PGRS subfamily.

The protein resides in the secreted. It is found in the cell wall. In terms of biological role, enhances mycobacterial intracellular survival, probably via altering host macrophage cytokine profiling and attenuating the cell apoptosis. Could be required for host endothelial-cell invasion. Its function is as follows. Expression in Mycobacterium smegmatis, a nonpathogenic species naturally deficient in PE_PGRS genes, results in alteration of the production of host cytokines, including IL-6, IL-1beta, IL-10 and IL-12p40, as well as enhanced survival within macrophages largely via attenuating the apoptosis of macrophages. This is PE-PGRS family protein PE_PGRS18 from Mycobacterium tuberculosis (strain ATCC 25618 / H37Rv).